Consider the following 286-residue polypeptide: Pantothenate synthetase (286 aa).

30-37 (MGFLHEGH) contacts ATP. Catalysis depends on His37, which acts as the Proton donor. A (R)-pantoate-binding site is contributed by Gln61. Gln61 provides a ligand contact to beta-alanine. 147–150 (GLKD) is an ATP binding site. Gln153 lines the (R)-pantoate pocket. Residues Val176 and 184 to 187 (KSSR) each bind ATP.

Belongs to the pantothenate synthetase family. As to quaternary structure, homodimer.

It is found in the cytoplasm. The catalysed reaction is (R)-pantoate + beta-alanine + ATP = (R)-pantothenate + AMP + diphosphate + H(+). It functions in the pathway cofactor biosynthesis; (R)-pantothenate biosynthesis; (R)-pantothenate from (R)-pantoate and beta-alanine: step 1/1. Catalyzes the condensation of pantoate with beta-alanine in an ATP-dependent reaction via a pantoyl-adenylate intermediate. The polypeptide is Pantothenate synthetase (Bacillus subtilis (strain 168)).